We begin with the raw amino-acid sequence, 367 residues long: Auxin efflux carrier component 8 (367 aa).

Topologically, residues 1–6 (MISWLD) are extracellular. Residues 7-27 (IYHVVSATVPLYVSMTLGFLS) traverse the membrane as a helical segment. Residues 28 to 38 (ARHLKLFSPEQ) lie on the Cytoplasmic side of the membrane. The chain crosses the membrane as a helical span at residues 39-59 (CAGINKFVAKFSIPLLSFQII). A (indol-3-yl)acetate-binding site is contributed by Ile51. At 60–69 (SENNPFKMSP) the chain is on the extracellular side. The helical transmembrane segment at 70–90 (KLILSDILQKFLVVVVLAMVL) threads the bilayer. Over 91-105 (RFWHPTGGRGGKLGW) the chain is Cytoplasmic. Residues 106–126 (VITGLSISVLPNTLILGMPIL) form a helical membrane-spanning segment. (indol-3-yl)acetate is bound by residues Asn117 and Leu119. Over 127–136 (SAIYGDEAAS) the chain is Extracellular. Residues 137-157 (ILEQIVVLQSLIWYTILLFLF) traverse the membrane as a helical segment. A (indol-3-yl)acetate-binding site is contributed by Tyr150. Topologically, residues 158-227 (ELNAARALPS…LIINPNTYAT (70 aa)) are cytoplasmic. A disordered region spans residues 168–194 (SGASLEHTGNDQEEANIEDEPKEEEDE). Acidic residues predominate over residues 178–194 (DQEEANIEDEPKEEEDE). A helical transmembrane segment spans residues 228–248 (LIGIIWATLHFRLGWNLPEMI). The Extracellular segment spans residues 249–251 (DKS). Residues 252–272 (IHLLSDGGLGMAMFSLGLFMA) traverse the membrane as a helical segment. At 273 to 288 (SQSSIIACGTKMAIIT) the chain is on the cytoplasmic side. Residues 289 to 309 (MLLKFVLGPALMIASAYCIRL) traverse the membrane as a helical segment. Residues 310-312 (KST) lie on the Extracellular side of the membrane. Residues 313–333 (LFKVAILQAALPQGVVPFVFA) form a helical membrane-spanning segment. Val327 and Val328 together coordinate (indol-3-yl)acetate. Residues 334 to 344 (KEYNLHPEIIS) are Cytoplasmic-facing. A helical transmembrane segment spans residues 345-365 (TGVIFGMLIALPTTLAYYFLL). The Extracellular portion of the chain corresponds to 366–367 (DL).

Belongs to the auxin efflux carrier (TC 2.A.69.1) family. In terms of assembly, homodimer. As to expression, expressed in veins of mature leaves. Strongly expressed in pollen.

It localises to the endoplasmic reticulum membrane. Its subcellular location is the cell membrane. With respect to regulation, auxin efflux carrier activity is competitively inhibited by naptalamate (N-1-naphthylphthalamic acid, NPA). Acts as a component of the auxin efflux carrier. Component of the intracellular auxin-transport pathway in the male gametophyte. Involved in the regulation of auxin homeostasis in pollen. Involved in the efflux of auxin from the endoplasmic reticulum into the cytoplasm. Binds auxins including indole-3-acetic acid (IAA), naphthaleneacetic acid (NAA) and the herbicide 2,4-dichlorophenoxyacetic acid (2,4-D), but barely indole-3-butyric acid (IBA) and 2-phenylacetic acid (PAA). PIN5 and PIN8 may have an antagonistic/compensatory activity. Involved in the control of vein patterning. Redundantly with PIN6, inhibits the vein-formation-promoting functions of PIN5. PIN5, PIN6, and PIN8 control vein network geometry, but they are expressed in mutually exclusive domains of leaf vascular cells. This Arabidopsis thaliana (Mouse-ear cress) protein is Auxin efflux carrier component 8.